We begin with the raw amino-acid sequence, 250 residues long: 5-oxoprolinase subunit A 2 (250 aa).

This sequence belongs to the LamB/PxpA family. Forms a complex composed of PxpA, PxpB and PxpC.

The enzyme catalyses 5-oxo-L-proline + ATP + 2 H2O = L-glutamate + ADP + phosphate + H(+). Functionally, catalyzes the cleavage of 5-oxoproline to form L-glutamate coupled to the hydrolysis of ATP to ADP and inorganic phosphate. This Bordetella bronchiseptica (strain ATCC BAA-588 / NCTC 13252 / RB50) (Alcaligenes bronchisepticus) protein is 5-oxoprolinase subunit A 2.